Here is a 48-residue protein sequence, read N- to C-terminus: Large ribosomal subunit protein bL33A (48 aa).

Belongs to the bacterial ribosomal protein bL33 family.

This chain is Large ribosomal subunit protein bL33A, found in Exiguobacterium sibiricum (strain DSM 17290 / CCUG 55495 / CIP 109462 / JCM 13490 / 255-15).